Reading from the N-terminus, the 317-residue chain is MNFSLSKQSSEKQSSYTDKSRSPNIGMCTVNYKSNLPLQVSAVDQLSTGKGTQFYGHNSYKNERECYNSTKINLPPISSLLPNFENNTPPNVDSRVQFPPQQVYQSMNVVPIVNEIYTPISMNATSDQYPIYYTESQQPIPHSQSPHLTSSAPLMMPVMVPTVYKPLTPYDKEPITIASEPNFTAISMASHPNAALELCHDRPKSVPPGYGVLPTMQEASNGRTKSEPGAVLNGSATFSDWKTDTRISSTKLRKQCPVCGKICSRPSTLKTHYLIHTGDTPFKCTWEGCTKSFNVKSNMLRHLKSHERKRNKVLNTT.

Residues 1 to 15 (MNFSLSKQSSEKQSS) show a composition bias toward low complexity. Residues 1 to 22 (MNFSLSKQSSEKQSSYTDKSRS) are disordered. 2 C2H2-type zinc fingers span residues 254–276 (KQCPVCGKICSRPSTLKTHYLIH) and 282–306 (FKCTWEGCTKSFNVKSNMLRHLKSH).

Its subcellular location is the nucleus. Functionally, probable transcription factor involved in the regulation of the transcription of genes involved in cell rescue and defense, as well as cell cycle and DNA processing. This chain is Zinc finger protein CRM3, found in Saccharomyces cerevisiae (strain ATCC 204508 / S288c) (Baker's yeast).